The sequence spans 268 residues: Undecaprenyl-diphosphatase (268 aa).

The next 7 membrane-spanning stretches (helical) occupy residues 47 to 67 (FAIL…FFKL), 83 to 103 (FIIG…IAGK), 109 to 129 (LFDP…LLWV), 144 to 164 (YPLL…IPGV), 184 to 204 (AAEF…VYDF), 218 to 238 (LVAI…KAFL), and 246 to 266 (FVLF…ALAL).

It belongs to the UppP family.

The protein localises to the cell inner membrane. The enzyme catalyses di-trans,octa-cis-undecaprenyl diphosphate + H2O = di-trans,octa-cis-undecaprenyl phosphate + phosphate + H(+). Catalyzes the dephosphorylation of undecaprenyl diphosphate (UPP). Confers resistance to bacitracin. This Bradyrhizobium sp. (strain BTAi1 / ATCC BAA-1182) protein is Undecaprenyl-diphosphatase.